An 80-amino-acid chain; its full sequence is Cell division protein ZapB (80 aa).

The stretch at 3–80 forms a coiled coil; the sequence is FEVLEKLEAK…SLLGKMEDVE (78 aa).

It belongs to the ZapB family. Homodimer. The ends of the coiled-coil dimer bind to each other, forming polymers. Interacts with FtsZ.

It is found in the cytoplasm. Non-essential, abundant cell division factor that is required for proper Z-ring formation. It is recruited early to the divisome by direct interaction with FtsZ, stimulating Z-ring assembly and thereby promoting cell division earlier in the cell cycle. Its recruitment to the Z-ring requires functional FtsA or ZipA. The protein is Cell division protein ZapB of Vibrio cholerae serotype O1 (strain ATCC 39541 / Classical Ogawa 395 / O395).